The following is a 695-amino-acid chain: Highly divergent homeobox (695 aa).

DNA-binding regions (homeobox) lie at residues 3–63 and 440–503; these read LRSV…SSKS and ALQD…RLMG. Residues 56-81 are disordered; it reads RRKMSSKSALESGGAPPGTAHTAPSV. Positions 653 to 695 are disordered; sequence QQALLSDLPPELEEMDFNHTSPEPDDTSFSLSSLSEKNASDSL. Residues 679-695 show a composition bias toward polar residues; the sequence is TSFSLSSLSEKNASDSL.

The protein resides in the nucleus. The chain is Highly divergent homeobox (HDX) from Gallus gallus (Chicken).